A 419-amino-acid chain; its full sequence is Serine hydroxymethyltransferase (419 aa).

(6S)-5,6,7,8-tetrahydrofolate contacts are provided by residues Leu-118 and 122-124 (GHL). At Lys-226 the chain carries N6-(pyridoxal phosphate)lysine. Position 242 (Glu-242) interacts with (6S)-5,6,7,8-tetrahydrofolate.

The protein belongs to the SHMT family. As to quaternary structure, homodimer. Pyridoxal 5'-phosphate serves as cofactor.

Its subcellular location is the cytoplasm. The catalysed reaction is (6R)-5,10-methylene-5,6,7,8-tetrahydrofolate + glycine + H2O = (6S)-5,6,7,8-tetrahydrofolate + L-serine. It participates in one-carbon metabolism; tetrahydrofolate interconversion. Its pathway is amino-acid biosynthesis; glycine biosynthesis; glycine from L-serine: step 1/1. Catalyzes the reversible interconversion of serine and glycine with tetrahydrofolate (THF) serving as the one-carbon carrier. This reaction serves as the major source of one-carbon groups required for the biosynthesis of purines, thymidylate, methionine, and other important biomolecules. Also exhibits THF-independent aldolase activity toward beta-hydroxyamino acids, producing glycine and aldehydes, via a retro-aldol mechanism. In Metamycoplasma arthritidis (strain 158L3-1) (Mycoplasma arthritidis), this protein is Serine hydroxymethyltransferase.